A 323-amino-acid chain; its full sequence is Methenyltetrahydromethanopterin cyclohydrolase (323 aa).

The protein belongs to the MCH family.

The protein localises to the cytoplasm. The enzyme catalyses 5,10-methenyl-5,6,7,8-tetrahydromethanopterin + H2O = N(5)-formyl-5,6,7,8-tetrahydromethanopterin + H(+). It participates in one-carbon metabolism; methanogenesis from CO(2); 5,10-methenyl-5,6,7,8-tetrahydromethanopterin from CO(2): step 3/3. Catalyzes the reversible interconversion of 5-formyl-H(4)MPT to methenyl-H(4)MPT(+). In Methanococcus maripaludis (strain C7 / ATCC BAA-1331), this protein is Methenyltetrahydromethanopterin cyclohydrolase.